The chain runs to 398 residues: 2,3,4,5-tetrahydropyridine-2,6-dicarboxylate N-succinyltransferase (398 aa).

Glu-268 acts as the Acyl-anhydride intermediate in catalysis. Succinyl-CoA-binding positions include Arg-270, Gly-285, Ser-288, Ala-311, 326–327 (DG), Gly-334, Lys-361, and 374–377 (RQNS).

The protein belongs to the type 2 tetrahydrodipicolinate N-succinyltransferase family. Homotrimer.

Its subcellular location is the cytoplasm. It catalyses the reaction (S)-2,3,4,5-tetrahydrodipicolinate + succinyl-CoA + H2O = (S)-2-succinylamino-6-oxoheptanedioate + CoA. Its pathway is amino-acid biosynthesis; L-lysine biosynthesis via DAP pathway; LL-2,6-diaminopimelate from (S)-tetrahydrodipicolinate (succinylase route): step 1/3. Functionally, catalyzes the conversion of the cyclic tetrahydrodipicolinate (THDP) into the acyclic N-succinyl-L-2-amino-6-oxopimelate using succinyl-CoA. In Sulfurimonas denitrificans (strain ATCC 33889 / DSM 1251) (Thiomicrospira denitrificans (strain ATCC 33889 / DSM 1251)), this protein is 2,3,4,5-tetrahydropyridine-2,6-dicarboxylate N-succinyltransferase.